The chain runs to 427 residues: Adenylosuccinate synthetase (427 aa).

GTP-binding positions include 12-18 (GDEGKGK) and 40-42 (GHT). Aspartate 13 functions as the Proton acceptor in the catalytic mechanism. Residues aspartate 13 and glycine 40 each contribute to the Mg(2+) site. IMP-binding positions include 13–16 (DEGK), 38–41 (NAGH), threonine 127, arginine 141, glutamine 222, threonine 237, and arginine 301. Histidine 41 serves as the catalytic Proton donor. Position 297 to 303 (297 to 303 (VVTKRPR)) interacts with substrate. GTP contacts are provided by residues arginine 303, 329 to 331 (SLD), and 411 to 413 (AVG).

It belongs to the adenylosuccinate synthetase family. As to quaternary structure, homodimer. Mg(2+) serves as cofactor.

The protein resides in the cytoplasm. The catalysed reaction is IMP + L-aspartate + GTP = N(6)-(1,2-dicarboxyethyl)-AMP + GDP + phosphate + 2 H(+). Its pathway is purine metabolism; AMP biosynthesis via de novo pathway; AMP from IMP: step 1/2. Plays an important role in the de novo pathway of purine nucleotide biosynthesis. Catalyzes the first committed step in the biosynthesis of AMP from IMP. The chain is Adenylosuccinate synthetase from Leuconostoc mesenteroides subsp. mesenteroides (strain ATCC 8293 / DSM 20343 / BCRC 11652 / CCM 1803 / JCM 6124 / NCDO 523 / NBRC 100496 / NCIMB 8023 / NCTC 12954 / NRRL B-1118 / 37Y).